Reading from the N-terminus, the 118-residue chain is Holo-[acyl-carrier-protein] synthase (118 aa).

Mg(2+) contacts are provided by Asp8 and Glu58.

The protein belongs to the P-Pant transferase superfamily. AcpS family. It depends on Mg(2+) as a cofactor.

The protein localises to the cytoplasm. It catalyses the reaction apo-[ACP] + CoA = holo-[ACP] + adenosine 3',5'-bisphosphate + H(+). Functionally, transfers the 4'-phosphopantetheine moiety from coenzyme A to a Ser of acyl-carrier-protein. In Listeria monocytogenes serotype 4b (strain CLIP80459), this protein is Holo-[acyl-carrier-protein] synthase.